The chain runs to 139 residues: Protein archease (139 aa).

The Ca(2+) site is built by Asp12, Asp138, and Ile139.

This sequence belongs to the archease family.

In terms of biological role, activates the tRNA-splicing ligase complex by facilitating the enzymatic turnover of catalytic subunit RtcB. Acts by promoting the guanylylation of RtcB, a key intermediate step in tRNA ligation. Can also alter the NTP specificity of RtcB such that ATP, dGTP or ITP is used efficiently. In Saccharolobus islandicus (strain Y.G.57.14 / Yellowstone #1) (Sulfolobus islandicus), this protein is Protein archease.